The sequence spans 361 residues: 3-dehydroquinate synthase (361 aa).

Residues 107–111 (GVIGD), 131–132 (TS), Lys-144, and Lys-153 each bind NAD(+). Zn(2+) is bound by residues Glu-186, His-251, and His-268.

Belongs to the sugar phosphate cyclases superfamily. Dehydroquinate synthase family. NAD(+) serves as cofactor. Requires Co(2+) as cofactor. The cofactor is Zn(2+).

Its subcellular location is the cytoplasm. It carries out the reaction 7-phospho-2-dehydro-3-deoxy-D-arabino-heptonate = 3-dehydroquinate + phosphate. Its pathway is metabolic intermediate biosynthesis; chorismate biosynthesis; chorismate from D-erythrose 4-phosphate and phosphoenolpyruvate: step 2/7. Catalyzes the conversion of 3-deoxy-D-arabino-heptulosonate 7-phosphate (DAHP) to dehydroquinate (DHQ). In Synechocystis sp. (strain ATCC 27184 / PCC 6803 / Kazusa), this protein is 3-dehydroquinate synthase.